The primary structure comprises 626 residues: Probable potassium transport system protein Kup (626 aa).

Helical transmembrane passes span 13–33 (VALMMGALGVVYGDIGTSPLY), 53–73 (VLSILFWLLMVVVSFKYVLLI), 102–122 (FFVVLGIFGAALFYGDSMITP), 138–158 (HTLDPWIVPLALLVLLALFAI), 169–189 (LFGPVMVVWFATLGVLGGWQV), 207–227 (FVFEFPVMSFLLLGAVVLALT), 248–268 (WFSMVLPSLTLCYLGQGALLL), 277–297 (PFFLMAPEWGLAALVGLATVA), 338–358 (IYLPQVNALLLCAVLVLVITF), 367–387 (AYGFAVTGTMLMTSILAFAVL), 399–419 (WMLVLGVLLIIDVLLFSANIF), and 421–441 (IHEGGWMPLLVGVVVFTLMMT).

It belongs to the HAK/KUP transporter (TC 2.A.72) family.

Its subcellular location is the cell inner membrane. The enzyme catalyses K(+)(in) + H(+)(in) = K(+)(out) + H(+)(out). In terms of biological role, transport of potassium into the cell. Likely operates as a K(+):H(+) symporter. The protein is Probable potassium transport system protein Kup of Bordetella avium (strain 197N).